The primary structure comprises 107 residues: SOSS complex subunit C (107 aa).

It belongs to the SOSS-C family. In terms of assembly, belongs to the multiprotein complex Integrator. Component of the SOSS complex, composed of soss-b (soss-b1/nabp2 or soss-b2/nabp1), soss-a/ints3 and soss-c/inip.

Its subcellular location is the nucleus. Functionally, component of the SOSS complex, a multiprotein complex that functions downstream of the MRN complex to promote DNA repair and G2/M checkpoint. The SOSS complex associates with single-stranded DNA at DNA lesions and influences diverse endpoints in the cellular DNA damage response including cell-cycle checkpoint activation, recombinational repair and maintenance of genomic stability. Required for efficient homologous recombination-dependent repair of double-strand breaks (DSBs). The sequence is that of SOSS complex subunit C (inip) from Salmo salar (Atlantic salmon).